Reading from the N-terminus, the 247-residue chain is Adenosylcobinamide-GDP ribazoletransferase (247 aa).

5 helical membrane-spanning segments follow: residues 34–54 (IVMF…IFIL), 59–79 (CGIP…TGGF), 113–133 (GGLA…ELAL), 138–158 (MLAA…LLMY), and 187–207 (LAVI…AMVV).

This sequence belongs to the CobS family. The cofactor is Mg(2+).

Its subcellular location is the cell inner membrane. It catalyses the reaction alpha-ribazole + adenosylcob(III)inamide-GDP = adenosylcob(III)alamin + GMP + H(+). It carries out the reaction alpha-ribazole 5'-phosphate + adenosylcob(III)inamide-GDP = adenosylcob(III)alamin 5'-phosphate + GMP + H(+). Its pathway is cofactor biosynthesis; adenosylcobalamin biosynthesis; adenosylcobalamin from cob(II)yrinate a,c-diamide: step 7/7. Joins adenosylcobinamide-GDP and alpha-ribazole to generate adenosylcobalamin (Ado-cobalamin). Also synthesizes adenosylcobalamin 5'-phosphate from adenosylcobinamide-GDP and alpha-ribazole 5'-phosphate. This chain is Adenosylcobinamide-GDP ribazoletransferase, found in Salmonella dublin (strain CT_02021853).